A 159-amino-acid polypeptide reads, in one-letter code: SsrA-binding protein (159 aa).

This sequence belongs to the SmpB family.

The protein resides in the cytoplasm. Functionally, required for rescue of stalled ribosomes mediated by trans-translation. Binds to transfer-messenger RNA (tmRNA), required for stable association of tmRNA with ribosomes. tmRNA and SmpB together mimic tRNA shape, replacing the anticodon stem-loop with SmpB. tmRNA is encoded by the ssrA gene; the 2 termini fold to resemble tRNA(Ala) and it encodes a 'tag peptide', a short internal open reading frame. During trans-translation Ala-aminoacylated tmRNA acts like a tRNA, entering the A-site of stalled ribosomes, displacing the stalled mRNA. The ribosome then switches to translate the ORF on the tmRNA; the nascent peptide is terminated with the 'tag peptide' encoded by the tmRNA and targeted for degradation. The ribosome is freed to recommence translation, which seems to be the essential function of trans-translation. This Mycobacteroides abscessus (strain ATCC 19977 / DSM 44196 / CCUG 20993 / CIP 104536 / JCM 13569 / NCTC 13031 / TMC 1543 / L948) (Mycobacterium abscessus) protein is SsrA-binding protein.